The chain runs to 831 residues: Molybdenum cofactor sulfurase (831 aa).

Residue lysine 262 is modified to N6-(pyridoxal phosphate)lysine. The active site involves cysteine 422. The 173-residue stretch at 651-823 (AWLSEFLGKP…LSIGSHVIPK (173 aa)) folds into the MOSC domain.

Belongs to the class-V pyridoxal-phosphate-dependent aminotransferase family. MOCOS subfamily. Pyridoxal 5'-phosphate serves as cofactor.

It carries out the reaction Mo-molybdopterin + L-cysteine + AH2 = thio-Mo-molybdopterin + L-alanine + A + H2O. It functions in the pathway cofactor biosynthesis; molybdopterin biosynthesis. Its function is as follows. Sulfurates the molybdenum cofactor. Sulfation of molybdenum is essential for xanthine dehydrogenase (XDH) and aldehyde oxidase (ADO) enzymes in which molybdenum cofactor is liganded by 1 oxygen and 1 sulfur atom in active form. This chain is Molybdenum cofactor sulfurase (mocos), found in Danio rerio (Zebrafish).